Consider the following 189-residue polypeptide: Auxin-responsive protein IAA3 (189 aa).

An EAR-like (transcriptional repression) motif is present at residues 12-16; the sequence is LRLGL. The interval 42-65 is disordered; that stretch reads TDTEKEIESSSRKTETSPPRKAQI. Basic and acidic residues predominate over residues 43 to 56; it reads DTEKEIESSSRKTE. The PB1 domain maps to 92–179; sequence GIYVKVSMDG…TCKRLRIMKG (88 aa).

It belongs to the Aux/IAA family. Homodimers and heterodimers. Interacts with TPL. Interacts with TIR1, the F-box component of the Skp1-Cdc53/cullin-F-box (SCFTIR1) E3 ubiquitin ligase complex. Phosphorylated by phytochrome A in vitro. In terms of tissue distribution, highly expressed in stems and flowers. Expressed in hypocotyls, cotyledons and leaves, but barely detected in roots. Expressed in root tips. In the root meristem, specifically detected at the vascular tissue transition zone.

Its subcellular location is the nucleus. Its function is as follows. Aux/IAA proteins are short-lived transcriptional factors that function as repressors of early auxin response genes at low auxin concentrations. Repression is thought to result from the interaction with auxin response factors (ARFs), proteins that bind to the auxin-responsive promoter element (AuxRE). Plays a central role in auxin regulation of root growth, in gravitropism, and in lateral root formation. Regulated by an auxin-induced protein turnover. Formation of heterodimers with ARF proteins may alter their ability to modulate early auxin response genes expression. When activated by cytokinin, restricts the expression of the PIN genes to the vascular transition zone. Induction of SHY2 in the vascular transition zone restricts BRX expression to down-regulate PIN3 and thus limit meristem growth, but proper SHY2 expression requires BRX. Involved in meristem growth and in determining its size. May participate in strigolactone signaling to regulate meristem size and lateral root formation. The sequence is that of Auxin-responsive protein IAA3 (IAA3) from Arabidopsis thaliana (Mouse-ear cress).